A 221-amino-acid polypeptide reads, in one-letter code: Deoxyribose-phosphate aldolase (221 aa).

Residue Asp-90 is the Proton donor/acceptor of the active site. The Schiff-base intermediate with acetaldehyde role is filled by Lys-152. Lys-181 functions as the Proton donor/acceptor in the catalytic mechanism.

The protein belongs to the DeoC/FbaB aldolase family. DeoC type 1 subfamily.

The protein resides in the cytoplasm. The enzyme catalyses 2-deoxy-D-ribose 5-phosphate = D-glyceraldehyde 3-phosphate + acetaldehyde. It functions in the pathway carbohydrate degradation; 2-deoxy-D-ribose 1-phosphate degradation; D-glyceraldehyde 3-phosphate and acetaldehyde from 2-deoxy-alpha-D-ribose 1-phosphate: step 2/2. Its function is as follows. Catalyzes a reversible aldol reaction between acetaldehyde and D-glyceraldehyde 3-phosphate to generate 2-deoxy-D-ribose 5-phosphate. The protein is Deoxyribose-phosphate aldolase of Exiguobacterium sibiricum (strain DSM 17290 / CCUG 55495 / CIP 109462 / JCM 13490 / 255-15).